Here is a 173-residue protein sequence, read N- to C-terminus: Crossover junction endodeoxyribonuclease RuvC (173 aa).

Residues aspartate 8, glutamate 69, and aspartate 141 contribute to the active site. Mg(2+)-binding residues include aspartate 8, glutamate 69, and aspartate 141.

This sequence belongs to the RuvC family. In terms of assembly, homodimer which binds Holliday junction (HJ) DNA. The HJ becomes 2-fold symmetrical on binding to RuvC with unstacked arms; it has a different conformation from HJ DNA in complex with RuvA. In the full resolvosome a probable DNA-RuvA(4)-RuvB(12)-RuvC(2) complex forms which resolves the HJ. Mg(2+) is required as a cofactor.

Its subcellular location is the cytoplasm. It carries out the reaction Endonucleolytic cleavage at a junction such as a reciprocal single-stranded crossover between two homologous DNA duplexes (Holliday junction).. Its function is as follows. The RuvA-RuvB-RuvC complex processes Holliday junction (HJ) DNA during genetic recombination and DNA repair. Endonuclease that resolves HJ intermediates. Cleaves cruciform DNA by making single-stranded nicks across the HJ at symmetrical positions within the homologous arms, yielding a 5'-phosphate and a 3'-hydroxyl group; requires a central core of homology in the junction. The consensus cleavage sequence is 5'-(A/T)TT(C/G)-3'. Cleavage occurs on the 3'-side of the TT dinucleotide at the point of strand exchange. HJ branch migration catalyzed by RuvA-RuvB allows RuvC to scan DNA until it finds its consensus sequence, where it cleaves and resolves the cruciform DNA. The polypeptide is Crossover junction endodeoxyribonuclease RuvC (Stenotrophomonas maltophilia (strain R551-3)).